A 743-amino-acid chain; its full sequence is F-box protein COS111 (743 aa).

The region spanning 145-191 (ELHIKNLPVEILDYIFYLVDDNLDYKSCMYTCKLFYFLAKPYYYENL) is the F-box domain. Disordered regions lie at residues 224-257 (IKPG…DPQY) and 311-330 (FSNV…SSST). The span at 229 to 248 (DEDEQEEGQEENAENGEEEN) shows a compositional bias: acidic residues.

In terms of biological role, F-box protein probably involved in ubiquitin conjugation pathway. This chain is F-box protein COS111 (COS111), found in Candida albicans (strain SC5314 / ATCC MYA-2876) (Yeast).